Consider the following 458-residue polypeptide: Ammonium transporter Rh type B (458 aa).

Over Met-1–Leu-13 the chain is Cytoplasmic. The chain crosses the membrane as a helical span at residues Gln-14 to Val-34. Topologically, residues Arg-35–Tyr-61 are extracellular. An N-linked (GlcNAc...) asparagine glycan is attached at Asn-49. A helical membrane pass occupies residues Pro-62–Leu-82. The Cytoplasmic segment spans residues Gln-83–Gly-86. Residues Phe-87 to Val-107 form a helical membrane-spanning segment. Residues Gln-108 to Glu-124 are Extracellular-facing. Residues Ser-125–Gly-145 traverse the membrane as a helical segment. The Cytoplasmic segment spans residues Lys-146 to Pro-149. The chain crosses the membrane as a helical span at residues Ala-150 to Leu-170. Residues Leu-171–Asp-178 lie on the Extracellular side of the membrane. The chain crosses the membrane as a helical span at residues Ala-179–Tyr-201. Over Arg-202–Asp-219 the chain is Cytoplasmic. The helical transmembrane segment at Leu-220–Leu-240 threads the bilayer. Topologically, residues Thr-241 to Ala-251 are extracellular. The chain crosses the membrane as a helical span at residues Leu-252 to Val-272. The Cytoplasmic portion of the chain corresponds to Gly-273–His-282. Residues Ile-283–Thr-303 traverse the membrane as a helical segment. Pro-304 is a topological domain (extracellular). A helical membrane pass occupies residues Phe-305–Phe-325. Residues Arg-326–Gly-346 are Cytoplasmic-facing. The helical transmembrane segment at Met-347–Ala-367 threads the bilayer. Topologically, residues Tyr-368 to Gln-393 are extracellular. The helical transmembrane segment at Leu-394 to Leu-414 threads the bilayer. Over Leu-415–Ala-458 the chain is Cytoplasmic. The interval Lys-416–Pro-424 is interaction with ANK3. A Basolateral sorting signal motif is present at residues Tyr-429 to Gln-432. The interval Gly-439–Ala-458 is disordered.

This sequence belongs to the ammonium transporter (TC 2.A.49) family. Rh subfamily. As to quaternary structure, interacts (via C-terminus) with ANK2 and ANK3; required for targeting to the basolateral membrane. In terms of processing, N-glycosylated.

Its subcellular location is the cell membrane. It is found in the basolateral cell membrane. The catalysed reaction is NH4(+)(in) = NH4(+)(out). The enzyme catalyses methylamine(out) = methylamine(in). It catalyses the reaction CO2(out) = CO2(in). Functionally, ammonium transporter involved in the maintenance of acid-base homeostasis. Transports ammonium and its related derivative methylammonium across the basolateral plasma membrane of epithelial cells likely contributing to renal transepithelial ammonia transport and ammonia metabolism. May transport either NH4(+) or NH3 ammonia species predominantly mediating an electrogenic NH4(+) transport. May act as a CO2 channel providing for renal acid secretion. The sequence is that of Ammonium transporter Rh type B (RHBG) from Pan troglodytes (Chimpanzee).